Consider the following 194-residue polypeptide: Putative 3-methyladenine DNA glycosylase (194 aa).

The protein belongs to the DNA glycosylase MPG family.

In Anaeromyxobacter sp. (strain Fw109-5), this protein is Putative 3-methyladenine DNA glycosylase.